The sequence spans 382 residues: V-type proton ATPase subunit C 1 (382 aa).

Residue T2 is modified to N-acetylthreonine.

It belongs to the V-ATPase C subunit family. As to quaternary structure, V-ATPase is a heteromultimeric enzyme made up of two complexes: the ATP-hydrolytic V1 complex and the proton translocation V0 complex. The V1 complex consists of three catalytic AB heterodimers that form a heterohexamer, three peripheral stalks each consisting of EG heterodimers, one central rotor including subunits D and F, and the regulatory subunits C and H. The proton translocation complex V0 consists of the proton transport subunit a, a ring of proteolipid subunits c9c'', rotary subunit d, subunits e and f, and the accessory subunits ATP6AP1/Ac45 and ATP6AP2/PRR.

It is found in the cytoplasmic vesicle. Its subcellular location is the secretory vesicle. The protein resides in the synaptic vesicle membrane. The protein localises to the clathrin-coated vesicle membrane. In terms of biological role, subunit of the V1 complex of vacuolar(H+)-ATPase (V-ATPase), a multisubunit enzyme composed of a peripheral complex (V1) that hydrolyzes ATP and a membrane integral complex (V0) that translocates protons. V-ATPase is responsible for acidifying and maintaining the pH of intracellular compartments and in some cell types, is targeted to the plasma membrane, where it is responsible for acidifying the extracellular environment. Subunit C is necessary for the assembly of the catalytic sector of the enzyme and is likely to have a specific function in its catalytic activity. In Macaca fascicularis (Crab-eating macaque), this protein is V-type proton ATPase subunit C 1 (ATP6V1C1).